Consider the following 447-residue polypeptide: Peptide chain release factor 1, mitochondrial (447 aa).

The N-terminal 63 residues, 1 to 63, are a transit peptide targeting the mitochondrion; the sequence is MNRRHLFAWL…LLNKNCSRRY (63 aa). The segment at 299-363 is GGQ domain; that stretch reads PKDLRIDTFR…LRARLYQQII (65 aa). Residues 313-315 carry the GGQ motif; it reads GGQ. Q315 is subject to N5-methylglutamine.

This sequence belongs to the prokaryotic/mitochondrial release factor family. In terms of processing, methylation of glutamine in the GGQ triplet by HEMK1 is conserved from bacteria to mammals.

The protein resides in the mitochondrion. Functionally, mitochondrial peptide chain release factor that directs the termination of translation in response to the peptide chain non-canonical stop codons AGG and AGA. Non-canonical termination codons AGG and AGA are found at the end of MT-CO1/COX1 and MT-ND6/ND6 open reading frames, respectively. Recognizes non-canonical stop codons via a network of interactions between the codon, MTRF1 and the ribosomal RNA (rRNA): in contrast to other translation release factors, which identify the codon in the A-site via direct interactions of amino acid side chains with the bases, MTRF1 repositions the first 2 bases of the stop codon to use an intricate network of interactions that includes residues of the release factor, the rRNA of the small ribosomal subunit, as well as neighboring bases of the mRNA. This is Peptide chain release factor 1, mitochondrial (MTRF1) from Bos taurus (Bovine).